Reading from the N-terminus, the 288-residue chain is Energy-coupling factor transporter ATP-binding protein EcfA2 (288 aa).

One can recognise an ABC transporter domain in the interval 3 to 245; sequence IIVKNLTHIY…NASKLKDIGL (243 aa). 40–47 is a binding site for ATP; the sequence is GHTGSGKS.

It belongs to the ABC transporter superfamily. Energy-coupling factor EcfA family. In terms of assembly, forms a stable energy-coupling factor (ECF) transporter complex composed of 2 membrane-embedded substrate-binding proteins (S component), 2 ATP-binding proteins (A component) and 2 transmembrane proteins (T component).

Its subcellular location is the cell membrane. Functionally, ATP-binding (A) component of a common energy-coupling factor (ECF) ABC-transporter complex. Unlike classic ABC transporters this ECF transporter provides the energy necessary to transport a number of different substrates. The sequence is that of Energy-coupling factor transporter ATP-binding protein EcfA2 from Clostridioides difficile (strain 630) (Peptoclostridium difficile).